A 745-amino-acid polypeptide reads, in one-letter code: DEAD-box ATP-dependent RNA helicase 3A, chloroplastic (745 aa).

Residues 1-41 (MASLVTLPAIAFSNPATASGAVRLRAAAFRCWALRRRGWAV) constitute a chloroplast transit peptide. Residues 88–116 (LAIARLGLPDELVATLEKRGITHLFPIQR) carry the Q motif motif. The region spanning 119 to 295 (LIPALGGRDL…RRYLNNPLTI (177 aa)) is the Helicase ATP-binding domain. 132 to 139 (AKTGTGKT) provides a ligand contact to ATP. The short motif at 243–246 (DEAD) is the DEAD box element. The 146-residue stretch at 324 to 469 (ILSDLITVYA…ISPPSIEEVL (146 aa)) folds into the Helicase C-terminal domain. Residues 606 to 724 (LTKISKLPAL…SLGGRESSRS (119 aa)) are disordered. The segment covering 641–650 (GGGASRGRGG) has biased composition (gly residues). Residues 656 to 670 (EDRYRRGGRSLRSDN) are compositionally biased toward basic and acidic residues. Residues 687–724 (RSSSSFGGRSSSYGSRGSPSPSFGVRSSSLGGRESSRS) are compositionally biased toward low complexity. The CCHC-type zinc-finger motif lies at 727-744 (GACFNCGESGHRASDCPN).

The protein belongs to the DEAD box helicase family. DDX21/DDX50 subfamily.

It localises to the plastid. Its subcellular location is the chloroplast. It catalyses the reaction ATP + H2O = ADP + phosphate + H(+). Its function is as follows. Nuclear genome-encoded factor involved in ribosome biogenesis in chloroplasts. Binds specific group II introns in chloroplasts and facilitates their splicing. Required for normal development of chloroplasts. This Zea mays (Maize) protein is DEAD-box ATP-dependent RNA helicase 3A, chloroplastic.